Here is a 321-residue protein sequence, read N- to C-terminus: Olfactory receptor 5P60 (321 aa).

At 1–28 (MAFLHNGNHTAVTEFILLGLTDDPVLRI) the chain is on the extracellular side. Asn-8 carries N-linked (GlcNAc...) asparagine glycosylation. A helical membrane pass occupies residues 29–49 (VLFTIILCIYLVTVSGNLSTI). Residues 50–57 (LLIRVSSQ) lie on the Cytoplasmic side of the membrane. The chain crosses the membrane as a helical span at residues 58–78 (LHHPMYFFLSHLASADIGYSS). Residues 79–102 (SVTPNMLVNFLVKQNTISYIGCSI) lie on the Extracellular side of the membrane. A disulfide bond links Cys-100 and Cys-192. A helical membrane pass occupies residues 103–123 (QFGSAAFFGGLECFLLAVMAY). At 124–136 (DRFVAICNPLLYS) the chain is on the cytoplasmic side. A helical transmembrane segment spans residues 137-157 (TKMSTQVCVQLVVGSYIGGFL). The Extracellular portion of the chain corresponds to 158-199 (NASFATVSFLFLFFCGPNIINHFFCDFAPLIELSCSDVRISV). The helical transmembrane segment at 200–220 (LVTSFSAGTVTMLTVLVIAIS) threads the bilayer. Residues 221–240 (YTYILITILKMRSTEGRHKA) lie on the Cytoplasmic side of the membrane. The helical transmembrane segment at 241 to 261 (FSTCTSHLTAVSLFYGTITFI) threads the bilayer. At 262 to 274 (YVMPKSRYSTDQN) the chain is on the extracellular side. The helical transmembrane segment at 275–295 (KVVSVFYMVVIPMLNPLIYSL) threads the bilayer. The Cytoplasmic portion of the chain corresponds to 296-321 (RNNEIKGALRRHLGKKIFSQSNILFY).

The protein belongs to the G-protein coupled receptor 1 family.

It localises to the cell membrane. Functionally, potential odorant receptor. This chain is Olfactory receptor 5P60, found in Mus musculus (Mouse).